The sequence spans 351 residues: MTIAIGREQERGWFDLMDDWLKRDRFVFIGWSGLLLFPCSYLALGAWFTGTTFVTSWYTHGLASSYLEGCNFLTAAVSSPANSMGHSLLFLWGPEAQGDFTRWCQIGGLWTFTALHGAFGLIGFCLRQFEIARLVGLRPYNAIAFSGPIAVFVSVFLLYPLGQASWFFAPSFGVAGIFRFILFLQGFHNWTLNPFHMMGVAGILGGALLCAIHGATVQNTLFEDGEASDTFRAFTPTQSEETYSMVTANRFWSQIFGVAFSNKRWLHFFLLFVPVAGLWASSIGIVGLALNLRAYDFVSQELRAAEDPEFETFYTKNILLNEGIRAWMAAQDQPHENFVFPEEVLPRGNAL.

The helical transmembrane segment at 39–59 threads the bilayer; that stretch reads CSYLALGAWFTGTTFVTSWYT. Residue His116 participates in chlorophyll a binding. A helical membrane pass occupies residues 123 to 139; sequence GFCLRQFEIARLVGLRP. Residues Gln128 and Asn141 each coordinate pheophytin a. A helical transmembrane segment spans residues 151–164; that stretch reads VFVSVFLLYPLGQA. Residue His196 participates in chlorophyll a binding. The helical transmembrane segment at 206 to 226 threads the bilayer; that stretch reads GALLCAIHGATVQNTLFEDGE. Residues His213 and Phe260 each contribute to the a plastoquinone site. A Fe cation-binding site is contributed by His213. His267 is a binding site for Fe cation. The helical transmembrane segment at 277-293 threads the bilayer; it reads GLWASSIGIVGLALNLR.

This sequence belongs to the reaction center PufL/M/PsbA/D family. In terms of assembly, PSII is composed of 1 copy each of membrane proteins PsbA, PsbB, PsbC, PsbD, PsbE, PsbF, PsbH, PsbI, PsbJ, PsbK, PsbL, PsbM, PsbT, PsbX, PsbY, PsbZ, Psb30/Ycf12, at least 3 peripheral proteins of the oxygen-evolving complex and a large number of cofactors. It forms dimeric complexes. The D1/D2 heterodimer binds P680, chlorophylls that are the primary electron donor of PSII, and subsequent electron acceptors. It shares a non-heme iron and each subunit binds pheophytin, quinone, additional chlorophylls, carotenoids and lipids. There is also a Cl(-1) ion associated with D1 and D2, which is required for oxygen evolution. The PSII complex binds additional chlorophylls, carotenoids and specific lipids. is required as a cofactor.

It localises to the plastid. The protein localises to the chloroplast thylakoid membrane. It carries out the reaction 2 a plastoquinone + 4 hnu + 2 H2O = 2 a plastoquinol + O2. Functionally, photosystem II (PSII) is a light-driven water:plastoquinone oxidoreductase that uses light energy to abstract electrons from H(2)O, generating O(2) and a proton gradient subsequently used for ATP formation. It consists of a core antenna complex that captures photons, and an electron transfer chain that converts photonic excitation into a charge separation. The D1/D2 (PsbA/PsbD) reaction center heterodimer binds P680, the primary electron donor of PSII as well as several subsequent electron acceptors. D2 is needed for assembly of a stable PSII complex. The chain is Photosystem II D2 protein from Cyanidioschyzon merolae (strain NIES-3377 / 10D) (Unicellular red alga).